Consider the following 216-residue polypeptide: Thymidylate kinase (216 aa).

10 to 17 contacts ATP; the sequence is GVDGSGKT.

It belongs to the thymidylate kinase family.

It catalyses the reaction dTMP + ATP = dTDP + ADP. In terms of biological role, phosphorylation of dTMP to form dTDP in both de novo and salvage pathways of dTTP synthesis. In Pelotomaculum thermopropionicum (strain DSM 13744 / JCM 10971 / SI), this protein is Thymidylate kinase.